The following is a 349-amino-acid chain: GDSL esterase/lipase At1g58525 (349 aa).

A signal peptide spans 1-19; sequence MKLQILLLALVLIAVEANA. Residue Asn25 is glycosylated (N-linked (GlcNAc...) asparagine). The Nucleophile role is filled by Ser37. A glycan (N-linked (GlcNAc...) asparagine) is linked at Asn316. Catalysis depends on residues Asp324 and His327.

It belongs to the 'GDSL' lipolytic enzyme family.

Its subcellular location is the secreted. This is GDSL esterase/lipase At1g58525 from Arabidopsis thaliana (Mouse-ear cress).